A 341-amino-acid chain; its full sequence is S-adenosylmethionine:tRNA ribosyltransferase-isomerase (341 aa).

Belongs to the QueA family. In terms of assembly, monomer.

Its subcellular location is the cytoplasm. It catalyses the reaction 7-aminomethyl-7-carbaguanosine(34) in tRNA + S-adenosyl-L-methionine = epoxyqueuosine(34) in tRNA + adenine + L-methionine + 2 H(+). It functions in the pathway tRNA modification; tRNA-queuosine biosynthesis. Its function is as follows. Transfers and isomerizes the ribose moiety from AdoMet to the 7-aminomethyl group of 7-deazaguanine (preQ1-tRNA) to give epoxyqueuosine (oQ-tRNA). This Symbiobacterium thermophilum (strain DSM 24528 / JCM 14929 / IAM 14863 / T) protein is S-adenosylmethionine:tRNA ribosyltransferase-isomerase.